An 81-amino-acid polypeptide reads, in one-letter code: Anaphase-promoting complex subunit emb-1 (81 aa).

The APC/C is probably composed of at least 12 subunits: apc-2, apc-10, apc-11, cdc-26, emb-1, emb-27, emb-30, mat-1, mat-2, mat-3, such-1 and gfi-3. In terms of tissue distribution, expressed in germ cells.

The protein operates within protein modification; protein ubiquitination. Its function is as follows. Probable component of the anaphase promoting complex/cyclosome (APC/C), a cell cycle-regulated E3 ubiquitin ligase that controls progression through mitosis and the G1 phase of the cell cycle. The APC/C complex acts by mediating ubiquitination and subsequent degradation of target proteins. Developmental role in early embryogenesis and the metaphase to anaphase transition in meiosis and mitosis. May be required for germline proliferation. Required for male tail development and hermaphrodite vulva formation. This Caenorhabditis elegans protein is Anaphase-promoting complex subunit emb-1.